The primary structure comprises 346 residues: UDP-3-O-acylglucosamine N-acyltransferase (346 aa).

Catalysis depends on H240, which acts as the Proton acceptor.

This sequence belongs to the transferase hexapeptide repeat family. LpxD subfamily. As to quaternary structure, homotrimer.

The enzyme catalyses a UDP-3-O-[(3R)-3-hydroxyacyl]-alpha-D-glucosamine + a (3R)-hydroxyacyl-[ACP] = a UDP-2-N,3-O-bis[(3R)-3-hydroxyacyl]-alpha-D-glucosamine + holo-[ACP] + H(+). The protein operates within bacterial outer membrane biogenesis; LPS lipid A biosynthesis. Catalyzes the N-acylation of UDP-3-O-acylglucosamine using 3-hydroxyacyl-ACP as the acyl donor. Is involved in the biosynthesis of lipid A, a phosphorylated glycolipid that anchors the lipopolysaccharide to the outer membrane of the cell. This Bacteroides thetaiotaomicron (strain ATCC 29148 / DSM 2079 / JCM 5827 / CCUG 10774 / NCTC 10582 / VPI-5482 / E50) protein is UDP-3-O-acylglucosamine N-acyltransferase.